A 390-amino-acid chain; its full sequence is Lipid-A-disaccharide synthase (390 aa).

The protein belongs to the LpxB family.

The catalysed reaction is a lipid X + a UDP-2-N,3-O-bis[(3R)-3-hydroxyacyl]-alpha-D-glucosamine = a lipid A disaccharide + UDP + H(+). It participates in bacterial outer membrane biogenesis; LPS lipid A biosynthesis. Condensation of UDP-2,3-diacylglucosamine and 2,3-diacylglucosamine-1-phosphate to form lipid A disaccharide, a precursor of lipid A, a phosphorylated glycolipid that anchors the lipopolysaccharide to the outer membrane of the cell. In Haemophilus influenzae (strain 86-028NP), this protein is Lipid-A-disaccharide synthase.